A 433-amino-acid polypeptide reads, in one-letter code: D-amino acid dehydrogenase (433 aa).

V3–Y17 is a binding site for FAD.

This sequence belongs to the DadA oxidoreductase family. FAD is required as a cofactor.

The catalysed reaction is a D-alpha-amino acid + A + H2O = a 2-oxocarboxylate + AH2 + NH4(+). In terms of biological role, oxidative deamination of D-amino acids. In Pseudomonas syringae pv. tomato (strain ATCC BAA-871 / DC3000), this protein is D-amino acid dehydrogenase.